A 100-amino-acid chain; its full sequence is Urease subunit gamma (100 aa).

It belongs to the urease gamma subunit family. Heterotrimer of UreA (gamma), UreB (beta) and UreC (alpha) subunits. Three heterotrimers associate to form the active enzyme.

Its subcellular location is the cytoplasm. The catalysed reaction is urea + 2 H2O + H(+) = hydrogencarbonate + 2 NH4(+). Its pathway is nitrogen metabolism; urea degradation; CO(2) and NH(3) from urea (urease route): step 1/1. This chain is Urease subunit gamma, found in Paraburkholderia phymatum (strain DSM 17167 / CIP 108236 / LMG 21445 / STM815) (Burkholderia phymatum).